Reading from the N-terminus, the 206-residue chain is Large ribosomal subunit protein uL4 (206 aa).

The interval 43-78 is disordered; that stretch reads ARSGNRAQKDREQVKHTTKKPWRQKGTGRARAGMSS. Basic residues predominate over residues 58-70; sequence HTTKKPWRQKGTG.

The protein belongs to the universal ribosomal protein uL4 family. In terms of assembly, part of the 50S ribosomal subunit.

Its function is as follows. One of the primary rRNA binding proteins, this protein initially binds near the 5'-end of the 23S rRNA. It is important during the early stages of 50S assembly. It makes multiple contacts with different domains of the 23S rRNA in the assembled 50S subunit and ribosome. Functionally, forms part of the polypeptide exit tunnel. The protein is Large ribosomal subunit protein uL4 of Polynucleobacter necessarius subsp. necessarius (strain STIR1).